The chain runs to 471 residues: Putative multidrug resistance protein MdtD (471 aa).

At 1–11 the chain is on the periplasmic side; the sequence is MTDLPDSTRWQ. A helical transmembrane segment spans residues 12-32; that stretch reads LWIVAFGFFMQSLDTTIVNTA. Topologically, residues 33–48 are cytoplasmic; it reads LPSMAQSLGESPLHMH. The chain crosses the membrane as a helical span at residues 49–69; the sequence is MVIVSYVLTVAVMLPASGWLA. Over 70-76 the chain is Periplasmic; it reads DKVGVRN. Residues 77-97 traverse the membrane as a helical segment; it reads IFFTAIVLFTLGSLFCALSGT. Over 98–101 the chain is Cytoplasmic; the sequence is LNEL. A helical transmembrane segment spans residues 102-124; it reads LLARALQGVGGAMMVPVGRLTVM. Residues 125 to 137 lie on the Periplasmic side of the membrane; the sequence is KIVPREQYMAAMT. The chain crosses the membrane as a helical span at residues 138–158; the sequence is FVTLPGQVGPLLGPALGGLLV. At 159–164 the chain is on the cytoplasmic side; it reads EYASWH. The helical transmembrane segment at 165-185 threads the bilayer; it reads WIFLINIPVGIIGAIATLMLM. Topologically, residues 186-196 are periplasmic; sequence PNYTMQTRRFD. Residues 197–217 form a helical membrane-spanning segment; that stretch reads LSGFLLLAVGMAVLTLALDGS. Topologically, residues 218–224 are cytoplasmic; the sequence is KGTGLSP. The chain crosses the membrane as a helical span at residues 225–245; it reads LAITGLVAVGVVALVLYLLHA. Over 246–262 the chain is Periplasmic; that stretch reads RNNNRALFSLKLFRTRT. Residues 263–283 form a helical membrane-spanning segment; it reads FSLGLAGSFAGRIGSGMLPFM. The Cytoplasmic portion of the chain corresponds to 284-285; it reads TP. Residues 286–306 traverse the membrane as a helical segment; that stretch reads VFLQIGLGFSPFHAGLMMIPM. Residues 307 to 341 lie on the Periplasmic side of the membrane; the sequence is VLGSMGMKRIVVQVVNRFGYRRVLVATTLGLSLVT. The chain crosses the membrane as a helical span at residues 342–362; the sequence is LLFMTTALLGWYYVLPFVLFL. Residues 363–395 lie on the Cytoplasmic side of the membrane; the sequence is QGMVNSTRFSSMNTLTLKDLPDNLASSGNSLLS. Residues 396–416 traverse the membrane as a helical segment; the sequence is MIMQLSMSIGVTIAGLLLGLF. Residues 417–430 are Periplasmic-facing; the sequence is GSQHVSVDSSTTQT. The helical transmembrane segment at 431 to 451 threads the bilayer; that stretch reads VFMYTWLSMAFIIALPAFIFA. The Cytoplasmic portion of the chain corresponds to 452-471; it reads RVPNDTHQNVAISRRKRSAQ.

The protein belongs to the major facilitator superfamily. TCR/Tet family.

The protein localises to the cell inner membrane. This chain is Putative multidrug resistance protein MdtD, found in Escherichia coli O157:H7.